The primary structure comprises 356 residues: Glucan endo-1,3-beta-glucosidase, acidic isoform GL153 (356 aa).

The first 29 residues, 1 to 29 (MALCIKNGFLAAALVLVGLLMCSIQMIGA), serve as a signal peptide directing secretion. Residue Gln-30 is modified to Pyrrolidone carboxylic acid. N-linked (GlcNAc...) asparagine glycosylation occurs at Asn-95. The active-site Proton donor is Glu-124. The active-site Nucleophile is Glu-264.

It belongs to the glycosyl hydrolase 17 family. As to expression, is expressed primarily in epidermal cell of healthy plant, and following induction by ethylene, accumulates in mesophyll cells.

It is found in the secreted. The protein localises to the extracellular space. The enzyme catalyses Hydrolysis of (1-&gt;3)-beta-D-glucosidic linkages in (1-&gt;3)-beta-D-glucans.. Its function is as follows. Is thought to be an important plant defense-related product against fungal pathogens. The protein is Glucan endo-1,3-beta-glucosidase, acidic isoform GL153 (GGL4) of Nicotiana tabacum (Common tobacco).